Reading from the N-terminus, the 469-residue chain is Cysteine--tRNA ligase (469 aa).

Residue C28 participates in Zn(2+) binding. The 'HIGH' region motif lies at 30-40 (PTVYNYIHIGN). 3 residues coordinate Zn(2+): C213, H238, and E242. The 'KMSKS' region motif lies at 270–274 (KMSKS). K273 is an ATP binding site.

This sequence belongs to the class-I aminoacyl-tRNA synthetase family. Monomer. Zn(2+) is required as a cofactor.

Its subcellular location is the cytoplasm. It catalyses the reaction tRNA(Cys) + L-cysteine + ATP = L-cysteinyl-tRNA(Cys) + AMP + diphosphate. The protein is Cysteine--tRNA ligase of Leuconostoc citreum (strain KM20).